Here is a 214-residue protein sequence, read N- to C-terminus: Adenylate kinase (214 aa).

An ATP-binding site is contributed by 10–15 (GAGKGT). Residues 30 to 59 (STGDMLRAAVKAGTPLGVKAQEIMIQGGLV) form an NMP region. AMP is bound by residues threonine 31, arginine 36, 57-59 (GLV), 85-88 (GFPR), and glutamine 92. Residues 126–163 (GRRSCSSCGKGYHLVFDPPLRAGVCDVCGSGLVQRADD) form an LID region. Arginine 127 serves as a coordination point for ATP. 4 residues coordinate Zn(2+): cysteine 130, cysteine 133, cysteine 150, and cysteine 153. Residues arginine 160 and arginine 171 each contribute to the AMP site. Residue glycine 199 coordinates ATP.

The protein belongs to the adenylate kinase family. As to quaternary structure, monomer.

Its subcellular location is the cytoplasm. The catalysed reaction is AMP + ATP = 2 ADP. It functions in the pathway purine metabolism; AMP biosynthesis via salvage pathway; AMP from ADP: step 1/1. Catalyzes the reversible transfer of the terminal phosphate group between ATP and AMP. Plays an important role in cellular energy homeostasis and in adenine nucleotide metabolism. This Trichlorobacter lovleyi (strain ATCC BAA-1151 / DSM 17278 / SZ) (Geobacter lovleyi) protein is Adenylate kinase.